A 1808-amino-acid chain; its full sequence is Tenascin (1808 aa).

A signal peptide spans 1–22; sequence MGLPSQVLACAILGLLYQHASG. Positions 23 to 33 are excised as a propeptide; that stretch reads GLIKRIIRQKR. Asparagine 38 is a glycosylation site (N-linked (GlcNAc...) asparagine). A glycan (O-linked (Xyl...) (chondroitin sulfate) serine) is linked at serine 72. The stretch at 118–142 forms a coiled coil; the sequence is DIKDLLSRLEELEGLVSSLREQCAS. N-linked (GlcNAc...) asparagine glycosylation is found at asparagine 168 and asparagine 186. Residues 176–188 enclose the EGF-like 1; incomplete domain; sequence CVCEPGWKGPNCS. EGF-like domains follow at residues 188-219, 219-250, 250-281, 281-312, 312-343, 343-374, 374-405, 405-436, 436-467, 467-498, 498-529, 529-560, and 560-591; these read SEPA…EDCS, SQAA…PDCG, GEEL…EDCN, NEPL…EDCG, GELI…EDCG, GELT…DDCS, SQKR…EDCG, GELR…EDCG, GELS…EDCR, and RERS…IDCS. Intrachain disulfides connect cysteine 192–cysteine 202, cysteine 196–cysteine 207, cysteine 209–cysteine 218, cysteine 223–cysteine 233, cysteine 227–cysteine 238, cysteine 240–cysteine 249, cysteine 254–cysteine 264, cysteine 258–cysteine 269, cysteine 271–cysteine 280, cysteine 285–cysteine 295, cysteine 289–cysteine 300, cysteine 302–cysteine 311, cysteine 316–cysteine 326, cysteine 320–cysteine 331, cysteine 333–cysteine 342, cysteine 347–cysteine 357, cysteine 351–cysteine 362, cysteine 364–cysteine 373, cysteine 378–cysteine 388, cysteine 382–cysteine 393, cysteine 395–cysteine 404, cysteine 409–cysteine 419, cysteine 413–cysteine 424, cysteine 426–cysteine 435, cysteine 440–cysteine 450, cysteine 444–cysteine 455, cysteine 457–cysteine 466, cysteine 471–cysteine 481, cysteine 475–cysteine 486, cysteine 488–cysteine 497, cysteine 502–cysteine 512, cysteine 506–cysteine 517, cysteine 519–cysteine 528, cysteine 533–cysteine 543, cysteine 537–cysteine 548, cysteine 550–cysteine 559, cysteine 564–cysteine 574, cysteine 568–cysteine 579, and cysteine 581–cysteine 590. The N-linked (GlcNAc...) asparagine glycan is linked to asparagine 328. Fibronectin type-III domains are found at residues 595–685, 686–775, 776–866, 867–957, 958–1046, 1047–1138, 1139–1228, 1229–1318, 1319–1408, 1409–1495, and 1496–1584; these read PPTE…LPAP, EGLK…TKLD, APSQ…DLDA, PRNL…TDLD, NPKD…EEEP, ELGN…AHPE, VGEL…EAEP, EVDN…TVVG, SPKG…ALDS, PSGL…TGLD, and APKD…TGLL. N-linked (GlcNAc...) asparagine glycosylation is found at asparagine 603, asparagine 643, asparagine 751, and asparagine 759. 6 N-linked (GlcNAc...) asparagine glycosylation sites follow: asparagine 1050, asparagine 1090, asparagine 1101, asparagine 1112, asparagine 1153, and asparagine 1183. N-linked (GlcNAc...) asparagine glycosylation occurs at asparagine 1416. The 216-residue stretch at 1582-1797 folds into the Fibrinogen C-terminal domain; that stretch reads GLLYPYPKDC…FAEMKLRPSS (216 aa). Residues asparagine 1736 and asparagine 1769 are each glycosylated (N-linked (GlcNAc...) asparagine).

Belongs to the tenascin family. In terms of assembly, homohexamer; disulfide-linked. A homotrimer may be formed in the triple coiled-coil region and may be stabilized by disulfide rings at both ends. Two of such half-hexabrachions may be disulfide linked within the central globule. Interacts with CSPG5. In terms of tissue distribution, expressed in the brain.

The protein resides in the secreted. The protein localises to the extracellular space. It localises to the extracellular matrix. Extracellular matrix protein implicated in guidance of migrating neurons as well as axons during development, synaptic plasticity as well as neuronal regeneration. Ligand for integrins alpha-8/beta-1, alpha-9/beta-1, alpha-V/beta-3 and alpha-V/beta-6. The polypeptide is Tenascin (TNC) (Gallus gallus (Chicken)).